The following is a 776-amino-acid chain: MRSLIYRQLLTNSYTVDLSDEIESIGSKNTQNVTINPGPFAQTGYAPVNWGPGEVNDSTTVEPTLDGPYQPTSFNPPVNYWMLLAPLNAGVIVEGTNNTNRWLATILVEPGVASTTRTYTLFGIQEQITVENSSNTKWKFIDLMKTTSSGTYTQHSPLLSEPKLYGIMKHGGQLWTYNGETPNAITNGYPTTNYDSVNMTSFCNFYIIPRSQESVRTGYINNGLPPIQNTRNIVPVSISSRSIIHQRAQANEDIIVSKTSLWKEMKYNRDITIRFKFANAIIKSGGLGYKWSEISFKPANYQYTYTRDGEEVNAHTTCSVNGVNDFSFNGGSLPTDFVISRYEVIKENSYVYVDYWDDSQAFRNMVYVRSLAADLNDVLCTGGDYSFALPVGQWPVMTGGAVSLHSAGVTLSTQFTDFVSLNSLRFRFRLSVEEPHFSITRTRVTGLYGLPAANPNNNNEYYEVAGRFSLISLVPSNDDYQTPIANSVTVRQDLERQLGELREEFNALSQEIAMSQLIDLALLPLDMFSMFSGIKSTIDAAKSMATNVMKKFKKSGLATSVSTLTDSLSDAASSISRGSSIRSIGSSASAWTDVSTQLIDVSSTVNTISTQTSTISRRLRLKEIATQTEGMNFDDISAAVLKTKIDRSTQIAPATLPDIVTEASEKFIPNRAYRVMDNNEVLEASTDGRLCAYRVETFEEIPFDVQKFADLVTDSPVISAIIDFKTLKNLNDNYGISREQAFNLLRSDPRMLREFINQDNPIIRNRIEQLILQCRL.

Residues Leu-65 to Leu-224 are spike head. A spike body and stalk (antigen domain) region spans residues Ala-248 to Asp-479. A DGE motif; interaction with ITGA2/ITGB1 heterodimer motif is present at residues Asp-308–Glu-310. An intrachain disulfide couples Cys-318 to Cys-380. The hydrophobic; possible role in virus entry into host cell stretch occupies residues Leu-389 to Val-409. A YGL motif; interaction with ITGA4 motif is present at residues Tyr-448–Leu-450. A coiled-coil region spans residues Ile-484–Glu-511. Positions Gln-510–Leu-776 are spike foot. Residues Lys-644–Asp-646 carry the KID motif; interaction with HSPA8 motif.

Belongs to the rotavirus VP4 family. As to quaternary structure, homotrimer. VP4 adopts a dimeric appearance above the capsid surface, while forming a trimeric base anchored inside the capsid layer. Only hints of the third molecule are observed above the capsid surface. It probably performs a series of molecular rearrangements during viral entry. Prior to trypsin cleavage, it is flexible. The priming trypsin cleavage triggers its rearrangement into rigid spikes with approximate two-fold symmetry of their protruding parts. After an unknown second triggering event, cleaved VP4 may undergo another rearrangement, in which two VP5* subunits fold back on themselves and join a third subunit to form a tightly associated trimer, shaped like a folded umbrella. Interacts with VP6. Interacts with VP7. Homotrimer. The trimer is coiled-coil stabilized by its C-terminus, however, its N-terminus, known as antigen domain or 'body', seems to be flexible allowing it to self-associate either as a dimer or a trimer. Post-translationally, proteolytic cleavage by trypsin results in activation of VP4 functions and greatly increases infectivity. The penetration into the host cell is dependent on trypsin treatment of VP4. It produces two peptides, VP5* and VP8* that remain associated with the virion. Cleavage of VP4 by trypsin probably occurs in vivo in the lumen of the intestine prior to infection of enterocytes. Trypsin seems to be incorporated into the three-layered viral particles but remains inactive as long as the viral outer capsid is intact and would only be activated upon the solubilization of the latter.

It localises to the virion. Its subcellular location is the host rough endoplasmic reticulum. It is found in the host cell membrane. The protein resides in the host cytoplasm. The protein localises to the host cytoskeleton. It localises to the host endoplasmic reticulum-Golgi intermediate compartment. Spike-forming protein that mediates virion attachment to the host epithelial cell receptors and plays a major role in cell penetration, determination of host range restriction and virulence. Rotavirus attachment and entry into the host cell probably involves multiple sequential contacts between the outer capsid proteins VP4 and VP7, and the cell receptors. It is subsequently lost, together with VP7, following virus entry into the host cell. Following entry into the host cell, low intracellular or intravesicular Ca(2+) concentration probably causes the calcium-stabilized VP7 trimers to dissociate from the virion. This step is probably necessary for the membrane-disrupting entry step and the release of VP4, which is locked onto the virion by VP7. During the virus exit from the host cell, VP4 seems to be required to target the newly formed virions to the host cell lipid rafts. In terms of biological role, forms the spike 'foot' and 'body' and acts as a membrane permeabilization protein that mediates release of viral particles from endosomal compartments into the cytoplasm. During entry, the part of VP5* that protrudes from the virus folds back on itself and reorganizes from a local dimer to a trimer. This reorganization may be linked to membrane penetration by exposing VP5* hydrophobic region. In integrin-dependent strains, VP5* targets the integrin heterodimer ITGA2/ITGB1 for cell attachment. Functionally, forms the head of the spikes and mediates the recognition of specific host cell surface glycans. It is the viral hemagglutinin and an important target of neutralizing antibodies. In sialic acid-dependent strains, VP8* binds to host cell sialic acid, most probably a ganglioside, providing the initial contact. In some other strains, VP8* mediates the attachment to histo-blood group antigens (HBGAs) for viral entry. The protein is Outer capsid protein VP4 of Rotavirus A (strain RVA/Human/Indonesia/69M/1980/G8P4[10]) (RV-A).